A 327-amino-acid polypeptide reads, in one-letter code: Glutaminase 1 (327 aa).

7 residues coordinate substrate: Ser-74, Asn-126, Glu-170, Asn-177, Tyr-201, Tyr-253, and Val-271.

The protein belongs to the glutaminase family. Homotetramer.

It carries out the reaction L-glutamine + H2O = L-glutamate + NH4(+). The polypeptide is Glutaminase 1 (glsA1) (Bacillus subtilis (strain 168)).